A 475-amino-acid chain; its full sequence is UDP-glycosyltransferase 76E1 (475 aa).

Histidine 19 functions as the Proton acceptor in the catalytic mechanism. Histidine 19 lines the an anthocyanidin pocket. The active-site Charge relay is aspartate 109. UDP-alpha-D-glucose-binding residues include threonine 131, alanine 329, glutamine 331, histidine 346, tryptophan 349, asparagine 350, serine 351, and glutamate 354. Alanine 369 provides a ligand contact to an anthocyanidin. UDP-alpha-D-glucose is bound by residues aspartate 370 and glutamine 371.

This sequence belongs to the UDP-glycosyltransferase family. As to expression, expressed in flowers and fruits.

Its subcellular location is the cytoplasm. The protein localises to the nucleus. It catalyses the reaction 2-cis-(+)-abscisate + UDP-alpha-D-glucose = beta-D-glucopyranosyl cis-(+)-abscisate + UDP. Its function is as follows. Glucosyltransferase acting on abscisic acid (ABA) but not on auxin (IAA). This chain is UDP-glycosyltransferase 76E1, found in Solanum lycopersicum (Tomato).